Consider the following 407-residue polypeptide: Argininosuccinate synthase (407 aa).

Residues 12–20 (AYSGGLDTS) and Ala-39 contribute to the ATP site. Residues Tyr-92 and Ser-97 each coordinate L-citrulline. Gly-122 lines the ATP pocket. L-aspartate is bound by residues Thr-124, Asn-128, and Asp-129. Position 128 (Asn-128) interacts with L-citrulline. Residues Arg-132, Ser-183, Ser-192, Glu-268, and Tyr-280 each coordinate L-citrulline.

This sequence belongs to the argininosuccinate synthase family. Type 1 subfamily. As to quaternary structure, homotetramer.

It is found in the cytoplasm. The enzyme catalyses L-citrulline + L-aspartate + ATP = 2-(N(omega)-L-arginino)succinate + AMP + diphosphate + H(+). It participates in amino-acid biosynthesis; L-arginine biosynthesis; L-arginine from L-ornithine and carbamoyl phosphate: step 2/3. This Caulobacter sp. (strain K31) protein is Argininosuccinate synthase.